A 243-amino-acid polypeptide reads, in one-letter code: Bidirectional sugar transporter SWEET2a (243 aa).

Residues 1–15 form the signal peptide; the sequence is MMNALGLSVAATSTG. The Extracellular segment spans residues 16-24; the sequence is SPFHDVCCY. Residues 25–45 form a helical membrane-spanning segment; the sequence is GAGIAGNIFALVLFISPLPTF. Positions 27–112 constitute a MtN3/slv 1 domain; that stretch reads GIAGNIFALV…ATFIAFADAK (86 aa). The Cytoplasmic portion of the chain corresponds to 46-56; it reads KRIVRNGSTEQ. The helical transmembrane segment at 57–79 threads the bilayer; it reads FSAMPYIYSLLNCLICLWYGLPF. The Extracellular portion of the chain corresponds to 80–90; that stretch reads VSYGVVLVATV. The chain crosses the membrane as a helical span at residues 91 to 111; sequence NSIGALFQLAYTATFIAFADA. Topologically, residues 112–118 are cytoplasmic; the sequence is KNRVKVS. Residues 119 to 139 form a helical membrane-spanning segment; sequence SLLVMVFGVFALIVYVSLALF. Topologically, residues 140-146 are extracellular; sequence DHQTRQL. The chain crosses the membrane as a helical span at residues 147–167; it reads FVGYLSVASLIFMFASPLSII. In terms of domain architecture, MtN3/slv 2 spans 147-229; that stretch reads FVGYLSVASL…QLVLYGYFRK (83 aa). The Cytoplasmic portion of the chain corresponds to 168 to 180; that stretch reads NLVIRTKSVEYMP. A helical transmembrane segment spans residues 181–201; the sequence is FYLSLSMFLMSVSFFAYGVLL. Residues 202 to 203 are Extracellular-facing; that stretch reads HD. Residues 204–224 form a helical membrane-spanning segment; sequence FFIYIPNGIGTVLGVIQLVLY. Topologically, residues 225 to 243 are cytoplasmic; sequence GYFRKGSREDSLPLLVTHT.

It belongs to the SWEET sugar transporter family. As to quaternary structure, forms homooligomers and/or heterooligomers.

It is found in the cell membrane. In terms of biological role, mediates both low-affinity uptake and efflux of sugar across the plasma membrane. The polypeptide is Bidirectional sugar transporter SWEET2a (SWEET2A) (Oryza sativa subsp. indica (Rice)).